Reading from the N-terminus, the 551-residue chain is MASKILVNIKEEVTCPICLELLTEPLSLDCGHSFCQACITANHKESRERSCPLCRVSYHSENLRPNRHLANIAERLREVMLSPEEGQKVDRCARHGEKLLLFCQQHGNVICWLCERSEEHRGHRTSLVEEVAQKYREKLQAALEMMRQKEQDAEMLEADVREEQASWKIQIENDKTSTLAEFKQLRDILDCEESNELQKLEKEEENLLKRLVQSENDMVLQTQSIRVLIADLERRLQGSVMELLQGVEGVIKRIKNVTLQKPETFLNEKRRVFQAPDLKGMLQVFKELKEVQCYWAHVTLIPNHPSCTVISEDKREVRYQEQIHHHPSMEVKYFYGILGSPSITSGKHYWEVDVSNKSAWILGVCVSLKCIGNFPGIENYQPQNGYWVIGLRNADNYSAFQDAVPETENYQPKNRNRFTGLQNADNCSAFQNAFPGIQSYQPKKSHLFTGLQNLSNYNAFQNKVQYNYIDFQDDSLSTPSAPLIVPLFMTICPKRVGVFLDYEACTVSFFNVTSNGYLIYKFSNCQFSYPVFPYFSPMTCELPMTLCSPSS.

Ala-2 carries the N-acetylalanine modification. The RING-type zinc-finger motif lies at 15-55 (CPICLELLTEPLSLDCGHSFCQACITANHKESRERSCPLCR). Ser-82 bears the Phosphoserine mark. The segment at 87–128 (QKVDRCARHGEKLLLFCQQHGNVICWLCERSEEHRGHRTSLV) adopts a B box-type zinc-finger fold. Zn(2+) contacts are provided by Cys-92, His-95, Cys-114, and His-120. Residues 127–221 (LVEEVAQKYR…VQSENDMVLQ (95 aa)) adopt a coiled-coil conformation. Positions 182-195 (FKQLRDILDCEESN) are required for interaction with GABARAP and for autophagy. Positions 276–551 (PDLKGMLQVF…LPMTLCSPSS (276 aa)) constitute a B30.2/SPRY domain.

Belongs to the TRIM/RBCC family. In terms of assembly, can form homodimers and homotrimers. In addition to lower-order dimerization, also exhibits a higher-order multimerization and both low- and high-order multimerizations are essential for its restriction activity. Interacts with BTBD1 and BTBD2. Interacts with PSMC4, PSMC5, PSMD7 and HSPA8/HSC70. Interacts (via B30.2/SPRY domain) with HSPA1A/B. Interacts with PSMC2, MAP3K7/TAK1, TAB2 and TAB3. Interacts with SQSTM1. Interacts with TRIM6 and TRIM34. Interacts with ULK1 (phosphorylated form), GABARAP, GABARAPL1, GABARAPL2, MAP1LC3A, MAP1LC3C and BECN1. Post-translationally, degraded in a proteasome-independent fashion in the absence of viral infection but in a proteasome-dependent fashion following exposure to restriction sensitive virus. Autoubiquitinated in a RING finger- and UBE2D2-dependent manner. Monoubiquitinated by TRIM21. Deubiquitinated by Yersinia YopJ. Ubiquitination may not lead to proteasomal degradation.

The protein localises to the cytoplasm. It localises to the nucleus. It carries out the reaction S-ubiquitinyl-[E2 ubiquitin-conjugating enzyme]-L-cysteine + [acceptor protein]-L-lysine = [E2 ubiquitin-conjugating enzyme]-L-cysteine + N(6)-ubiquitinyl-[acceptor protein]-L-lysine.. It functions in the pathway protein modification; protein ubiquitination. In terms of biological role, capsid-specific restriction factor that prevents infection from non-host-adapted retroviruses. Blocks viral replication early in the life cycle, after viral entry but before reverse transcription. In addition to acting as a capsid-specific restriction factor, also acts as a pattern recognition receptor that activates innate immune signaling in response to the retroviral capsid lattice. Binding to the viral capsid triggers its E3 ubiquitin ligase activity, and in concert with the heterodimeric ubiquitin conjugating enzyme complex UBE2V1-UBE2N (also known as UBC13-UEV1A complex) generates 'Lys-63'-linked polyubiquitin chains, which in turn are catalysts in the autophosphorylation of the MAP3K7/TAK1 complex (includes TAK1, TAB2, and TAB3). Activation of the MAP3K7/TAK1 complex by autophosphorylation results in the induction and expression of NF-kappa-B and MAPK-responsive inflammatory genes, thereby leading to an innate immune response in the infected cell. Plays a role in regulating autophagy through activation of autophagy regulator BECN1 by causing its dissociation from its inhibitors BCL2 and TAB2. The protein is Tripartite motif-containing protein 5 (TRIM5) of Alouatta sara (Bolivian red howler monkey).